A 443-amino-acid chain; its full sequence is D(2) dopamine receptor (443 aa).

At M1 to Y37 the chain is on the extracellular side. N5, N17, and N23 each carry an N-linked (GlcNAc...) asparagine glycan. A helical membrane pass occupies residues A38–S60. The Cytoplasmic portion of the chain corresponds to R61–N70. The helical transmembrane segment at Y71–Y93 threads the bilayer. Over L94–D108 the chain is Extracellular. The cysteines at positions 107 and 182 are disulfide-linked. Residues I109–I130 traverse the membrane as a helical segment. Topologically, residues D131 to R151 are cytoplasmic. A helical membrane pass occupies residues V152 to F172. The Extracellular portion of the chain corresponds to G173 to A188. Residues F189 to Y213 traverse the membrane as a helical segment. Residues K211–Q373 are interaction with PPP1R9B. Residues I214 to Q373 lie on the Cytoplasmic side of the membrane. The segment at E282–K332 is disordered. Residues A323–K332 show a composition bias toward basic and acidic residues. Residues M374 to L395 form a helical membrane-spanning segment. Residues N396–S409 lie on the Extracellular side of the membrane. Residues C399 and C401 are joined by a disulfide bond. A helical membrane pass occupies residues A410 to I431. Over E432–C443 the chain is Cytoplasmic. The S-palmitoyl cysteine moiety is linked to residue C443.

Belongs to the G-protein coupled receptor 1 family. In terms of assembly, forms homo- and heterooligomers with DRD4. The interaction with DRD4 may modulate agonist-induced downstream signaling. Interacts with CADPS and CADPS2. Interacts with GPRASP1, PPP1R9B and CLIC6. Interacts with ARRB2. Interacts with HTR2A. Interacts with DRD1. Interacts with KCNA2. Post-translationally, palmitoylated. Palmitoylation which is required for proper localization to the plasma membrane and stability of the receptor could be carried on by ZDHHC4, ZDHHC3 and ZDHHC8.

The protein resides in the cell membrane. The protein localises to the golgi apparatus membrane. In terms of biological role, dopamine receptor whose activity is mediated by G proteins which inhibit adenylyl cyclase. Positively regulates postnatal regression of retinal hyaloid vessels via suppression of VEGFR2/KDR activity, downstream of OPN5. The sequence is that of D(2) dopamine receptor (DRD2) from Canis lupus familiaris (Dog).